The sequence spans 602 residues: Aspartate--tRNA(Asp/Asn) ligase (602 aa).

Position 176 (Glu176) interacts with L-aspartate. Residues 200-203 (QQFK) form an aspartate region. Positions 222 and 452 each coordinate L-aspartate. Residue 222 to 224 (RDE) participates in ATP binding. Glu490 is an ATP binding site. Arg497 lines the L-aspartate pocket. 542–545 (GIDR) contacts ATP.

It belongs to the class-II aminoacyl-tRNA synthetase family. Type 1 subfamily. In terms of assembly, homodimer.

The protein localises to the cytoplasm. The catalysed reaction is tRNA(Asx) + L-aspartate + ATP = L-aspartyl-tRNA(Asx) + AMP + diphosphate. Functionally, aspartyl-tRNA synthetase with relaxed tRNA specificity since it is able to aspartylate not only its cognate tRNA(Asp) but also tRNA(Asn). Reaction proceeds in two steps: L-aspartate is first activated by ATP to form Asp-AMP and then transferred to the acceptor end of tRNA(Asp/Asn). In Rickettsia akari (strain Hartford), this protein is Aspartate--tRNA(Asp/Asn) ligase.